The primary structure comprises 360 residues: Decorin (360 aa).

Positions 1–16 (MKATIIFFLVAQVSWA) are cleaved as a signal peptide. A propeptide spanning residues 17–30 (GPFQQKGLFDFMLE) is cleaved from the precursor. O-linked (Xyl...) (glycosaminoglycan) serine glycosylation is present at Ser-34. 2 cysteine pairs are disulfide-bonded: Cys-55-Cys-61 and Cys-59-Cys-68. 12 LRR repeats span residues 74–94 (EKVP…NNKI), 95–118 (TEIK…NNKI), 119–142 (SKIS…KNQL), 143–163 (KELP…ENEI), 164–187 (TKVR…TNPL), 188–213 (KSSG…DTNI), 214–234 (TTIP…GNKI), 235–258 (TKVD…FNSI), 259–282 (SAVD…NNKL), 283–305 (VKVP…NNNI), 306–335 (SAIG…SNPV), and 336–360 (QYWE…GNYK). Asn-212 carries N-linked (GlcNAc...) asparagine glycosylation. N-linked (GlcNAc...) asparagine glycosylation is found at Asn-263 and Asn-304. A disulfide bridge connects residues Cys-314 and Cys-347.

This sequence belongs to the small leucine-rich proteoglycan (SLRP) family. SLRP class I subfamily. Binds to type I and type II collagen, fibronectin and TGF-beta. Forms a ternary complex with MFAP2 and ELN. Interacts with DPT. In terms of processing, the attached glycosaminoglycan chain can be either chondroitin sulfate or dermatan sulfate depending upon the tissue of origin.

Its subcellular location is the secreted. The protein localises to the extracellular space. It localises to the extracellular matrix. Functionally, may affect the rate of fibrils formation. This Ovis aries (Sheep) protein is Decorin (DCN).